Here is a 199-residue protein sequence, read N- to C-terminus: Adenylyl-sulfate kinase (199 aa).

The tract at residues 1–21 (MSQSSNITWHDSEVTKSDRQQ) is disordered. Over residues 10–19 (HDSEVTKSDR) the composition is skewed to basic and acidic residues. ATP is bound at residue 34-41 (GLSGSGKS). Ser-108 (phosphoserine intermediate) is an active-site residue.

Belongs to the APS kinase family.

It carries out the reaction adenosine 5'-phosphosulfate + ATP = 3'-phosphoadenylyl sulfate + ADP + H(+). It functions in the pathway sulfur metabolism; hydrogen sulfide biosynthesis; sulfite from sulfate: step 2/3. In terms of biological role, catalyzes the synthesis of activated sulfate. The protein is Adenylyl-sulfate kinase of Staphylococcus haemolyticus (strain JCSC1435).